Here is an 88-residue protein sequence, read N- to C-terminus: Small ribosomal subunit protein uS15c (88 aa).

This sequence belongs to the universal ribosomal protein uS15 family. In terms of assembly, part of the 30S ribosomal subunit.

The protein resides in the plastid. It localises to the chloroplast. The protein is Small ribosomal subunit protein uS15c (rps15) of Lepidium virginicum (Virginia pepperweed).